Here is a 432-residue protein sequence, read N- to C-terminus: Glutamate-1-semialdehyde 2,1-aminomutase (432 aa).

At Lys272 the chain carries N6-(pyridoxal phosphate)lysine.

Belongs to the class-III pyridoxal-phosphate-dependent aminotransferase family. HemL subfamily. Homodimer. It depends on pyridoxal 5'-phosphate as a cofactor.

It is found in the cytoplasm. The catalysed reaction is (S)-4-amino-5-oxopentanoate = 5-aminolevulinate. The protein operates within porphyrin-containing compound metabolism; protoporphyrin-IX biosynthesis; 5-aminolevulinate from L-glutamyl-tRNA(Glu): step 2/2. Its pathway is porphyrin-containing compound metabolism; chlorophyll biosynthesis. The polypeptide is Glutamate-1-semialdehyde 2,1-aminomutase (Nostoc punctiforme (strain ATCC 29133 / PCC 73102)).